Reading from the N-terminus, the 296-residue chain is Cytochrome bc1 complex cytochrome c subunit (296 aa).

A compositionally biased stretch (polar residues) spans methionine 1–alanine 19. The disordered stretch occupies residues methionine 1–lysine 27. The chain crosses the membrane as a helical span at residues valine 32 to isoleucine 52. Cytochrome c domains follow at residues alanine 67–glycine 147 and leucine 177–lysine 255. The heme c site is built by cysteine 80, cysteine 83, histidine 84, cysteine 190, cysteine 193, and histidine 194. The helical transmembrane segment at glycine 274 to serine 294 threads the bilayer.

As to quaternary structure, the cytochrome bc1 complex is composed of a cytochrome b (QcrB), the Rieske iron-sulfur protein (QcrA) and a diheme cytochrome c (QcrC) subunit. The bc1 complex forms a supercomplex with cytochrome c oxidase (cytochrome aa3). Binds 2 heme c groups covalently per subunit.

Its subcellular location is the cell membrane. It carries out the reaction a quinol + 2 Fe(III)-[cytochrome c](out) = a quinone + 2 Fe(II)-[cytochrome c](out) + 2 H(+)(out). In terms of biological role, cytochrome c1 subunit of the cytochrome bc1 complex, an essential component of the respiratory electron transport chain required for ATP synthesis. The bc1 complex catalyzes the oxidation of menaquinol and the reduction of cytochrome c in the respiratory chain. The bc1 complex operates through a Q-cycle mechanism that couples electron transfer to generation of the proton gradient that drives ATP synthesis. The sequence is that of Cytochrome bc1 complex cytochrome c subunit (qcrC) from Corynebacterium efficiens (strain DSM 44549 / YS-314 / AJ 12310 / JCM 11189 / NBRC 100395).